A 132-amino-acid polypeptide reads, in one-letter code: Glycine cleavage system H protein (132 aa).

In terms of domain architecture, Lipoyl-binding spans 27–109 (FATIGISAFA…FDFGWILKVK (83 aa)). An N6-lipoyllysine modification is found at K68.

It belongs to the GcvH family. The glycine cleavage system is composed of four proteins: P, T, L and H. The cofactor is (R)-lipoate.

Its function is as follows. The glycine cleavage system catalyzes the degradation of glycine. The H protein shuttles the methylamine group of glycine from the P protein to the T protein. The polypeptide is Glycine cleavage system H protein (Rhodopirellula baltica (strain DSM 10527 / NCIMB 13988 / SH1)).